A 133-amino-acid chain; its full sequence is Agglutinin alpha chain (133 aa).

Positions 1–133 (GVTFDDGAYT…LDYFSIYLSL (133 aa)) constitute a Jacalin-type lectin domain.

This sequence belongs to the jacalin lectin family. Formed of four alpha chains and four beta chains.

Functionally, D-galactose-specific lectin, binds the T-antigen structure Gal-beta1,3-GalNAc. This Maclura pomifera (Osage orange) protein is Agglutinin alpha chain.